The chain runs to 89 residues: Small ribosomal subunit protein uS15 (89 aa).

The protein belongs to the universal ribosomal protein uS15 family. As to quaternary structure, part of the 30S ribosomal subunit. Forms a bridge to the 50S subunit in the 70S ribosome, contacting the 23S rRNA.

Its function is as follows. One of the primary rRNA binding proteins, it binds directly to 16S rRNA where it helps nucleate assembly of the platform of the 30S subunit by binding and bridging several RNA helices of the 16S rRNA. Forms an intersubunit bridge (bridge B4) with the 23S rRNA of the 50S subunit in the ribosome. The chain is Small ribosomal subunit protein uS15 from Geobacillus sp. (strain WCH70).